A 446-amino-acid chain; its full sequence is WD repeat domain phosphoinositide-interacting protein 1 (446 aa).

WD repeat units follow at residues 3–42 (AEAA…LFSL), 47–88 (QLDQ…VYHF), 92–126 (TEIC…IHNI), 131–173 (LLKT…LYDG), 177–216 (KTVC…VFSV), 222–261 (LYEF…IFKL), and 304–343 (FATA…MYNL). The Nuclear receptor interaction motif lies at 131–136 (LLKTLL). Positions 225 to 228 (FRRG) match the L/FRRG motif motif. The disordered stretch occupies residues 386–406 (ARPSASSASTVPGYSEDGGAL).

This sequence belongs to the WD repeat PROPPIN family. Interacts with androgen receptor (AR) and the estrogen receptors ESR1 and ESR2. Interacts with WIPI2. Interacts with WDR45. Interacts with ATG16L1. May interact with NUDC. As to expression, ubiquitously expressed. Highly expressed in skeletal muscle, heart, testis, pancreas and placenta. Highly expressed in G361, Sk-mel-28, Sk-mel-13, WM852 and WM451 cells. Up-regulated in a variety of tumor tissues.

The protein resides in the golgi apparatus. The protein localises to the trans-Golgi network. Its subcellular location is the endosome. It is found in the cytoplasmic vesicle. It localises to the clathrin-coated vesicle. The protein resides in the preautophagosomal structure membrane. The protein localises to the cytoplasm. Its subcellular location is the cytoskeleton. Functionally, component of the autophagy machinery that controls the major intracellular degradation process by which cytoplasmic materials are packaged into autophagosomes and delivered to lysosomes for degradation. Plays an important role in starvation- and calcium-mediated autophagy, as well as in mitophagy. Functions downstream of the ULK1 and PI3-kinases that produce phosphatidylinositol 3-phosphate (PtdIns3P) on membranes of the endoplasmic reticulum once activated. Binds phosphatidylinositol 3-phosphate (PtdIns3P), and maybe other phosphoinositides including PtdIns3,5P2 and PtdIns5P, and is recruited to phagophore assembly sites at the endoplasmic reticulum membranes. There, it assists WIPI2 in the recruitment of ATG12-ATG5-ATG16L1, a complex that directly controls the elongation of the nascent autophagosomal membrane. Together with WDR45/WIPI4, promotes ATG2 (ATG2A or ATG2B)-mediated lipid transfer by enhancing ATG2-association with phosphatidylinositol 3-monophosphate (PI3P)-containing membranes. Involved in xenophagy of Staphylococcus aureus. Invading S.aureus cells become entrapped in autophagosome-like WIPI1 positive vesicles targeted for lysosomal degradation. Also plays a distinct role in controlling the transcription of melanogenic enzymes and melanosome maturation, a process that is distinct from starvation-induced autophagy. May also regulate the trafficking of proteins involved in the mannose-6-phosphate receptor (MPR) recycling pathway. In Homo sapiens (Human), this protein is WD repeat domain phosphoinositide-interacting protein 1 (WIPI1).